Consider the following 421-residue polypeptide: uncharacterized protein (421 aa).

Belongs to the glycosyltransferase 28 family.

This is an uncharacterized protein from Mycobacterium leprae (strain TN).